The primary structure comprises 152 residues: MKTPIELKILDSRIGSEFPLPAYATLGSAGMDLRAMIDTTMTIAPGETQLIPTGIAIHVADPGLAAVLLPRSGLGHKHGIVLGNLVGLIDSDYQGPLMVSCWNRSDIPFTLEIGDRLAQLVFVPVVQAQFKLVDEFDSSDRGEGGFGHSGTK.

Substrate is bound by residues 71–73 (RSG), Asn-84, 88–90 (LID), and Met-98.

It belongs to the dUTPase family. Requires Mg(2+) as cofactor.

It carries out the reaction dUTP + H2O = dUMP + diphosphate + H(+). Its pathway is pyrimidine metabolism; dUMP biosynthesis; dUMP from dCTP (dUTP route): step 2/2. Functionally, this enzyme is involved in nucleotide metabolism: it produces dUMP, the immediate precursor of thymidine nucleotides and it decreases the intracellular concentration of dUTP so that uracil cannot be incorporated into DNA. This Shewanella sp. (strain MR-7) protein is Deoxyuridine 5'-triphosphate nucleotidohydrolase.